A 420-amino-acid chain; its full sequence is Gamma-glutamyl phosphate reductase (420 aa).

It belongs to the gamma-glutamyl phosphate reductase family.

The protein resides in the cytoplasm. It catalyses the reaction L-glutamate 5-semialdehyde + phosphate + NADP(+) = L-glutamyl 5-phosphate + NADPH + H(+). It functions in the pathway amino-acid biosynthesis; L-proline biosynthesis; L-glutamate 5-semialdehyde from L-glutamate: step 2/2. In terms of biological role, catalyzes the NADPH-dependent reduction of L-glutamate 5-phosphate into L-glutamate 5-semialdehyde and phosphate. The product spontaneously undergoes cyclization to form 1-pyrroline-5-carboxylate. The protein is Gamma-glutamyl phosphate reductase of Cereibacter sphaeroides (strain KD131 / KCTC 12085) (Rhodobacter sphaeroides).